Consider the following 112-residue polypeptide: Large ribosomal subunit protein uL22 (112 aa).

Belongs to the universal ribosomal protein uL22 family. Part of the 50S ribosomal subunit.

Its function is as follows. This protein binds specifically to 23S rRNA; its binding is stimulated by other ribosomal proteins, e.g. L4, L17, and L20. It is important during the early stages of 50S assembly. It makes multiple contacts with different domains of the 23S rRNA in the assembled 50S subunit and ribosome. Functionally, the globular domain of the protein is located near the polypeptide exit tunnel on the outside of the subunit, while an extended beta-hairpin is found that lines the wall of the exit tunnel in the center of the 70S ribosome. This chain is Large ribosomal subunit protein uL22, found in Mesoplasma florum (strain ATCC 33453 / NBRC 100688 / NCTC 11704 / L1) (Acholeplasma florum).